The following is a 318-amino-acid chain: Aspartate carbamoyltransferase catalytic subunit (318 aa).

Carbamoyl phosphate-binding residues include Arg-64 and Thr-65. Residue Lys-92 coordinates L-aspartate. Residues Arg-114, His-142, and Gln-145 each contribute to the carbamoyl phosphate site. L-aspartate-binding residues include Arg-176 and Arg-230. The carbamoyl phosphate site is built by Gly-271 and Pro-272.

It belongs to the aspartate/ornithine carbamoyltransferase superfamily. ATCase family. In terms of assembly, heterododecamer (2C3:3R2) of six catalytic PyrB chains organized as two trimers (C3), and six regulatory PyrI chains organized as three dimers (R2).

The catalysed reaction is carbamoyl phosphate + L-aspartate = N-carbamoyl-L-aspartate + phosphate + H(+). Its pathway is pyrimidine metabolism; UMP biosynthesis via de novo pathway; (S)-dihydroorotate from bicarbonate: step 2/3. Its function is as follows. Catalyzes the condensation of carbamoyl phosphate and aspartate to form carbamoyl aspartate and inorganic phosphate, the committed step in the de novo pyrimidine nucleotide biosynthesis pathway. This Desulfovibrio desulfuricans (strain ATCC 27774 / DSM 6949 / MB) protein is Aspartate carbamoyltransferase catalytic subunit.